We begin with the raw amino-acid sequence, 189 residues long: Protein jagunal homolog (189 aa).

Residues 1 to 34 lie on the Cytoplasmic side of the membrane; it reads MSSRGVRAAGTDGNDFQNRQRIAQHYQESAQYKS. The helical transmembrane segment at 35–55 threads the bilayer; that stretch reads VLKWFFVPHFLILVFMWLKVG. Over 56-75 the chain is Lumenal; it reads SEFLRYNFGWKNAFFERLDM. A helical transmembrane segment spans residues 76–96; it reads PAAYPWEYVWCLSFIPIVLAL. Residues 97 to 105 lie on the Cytoplasmic side of the membrane; the sequence is SSFQRNKLK. Residues 106 to 126 form a helical membrane-spanning segment; sequence VLHYAYYAEFICGIFPCMIGL. Over 127–150 the chain is Lumenal; sequence GGQLPELLEYANDMEGSNTPTFKG. Residues 151–171 traverse the membrane as a helical segment; it reads IFPMVIIWYIFFAVALQIHGF. Residues 172-189 lie on the Cytoplasmic side of the membrane; sequence SMYFMHHLAAAWAPVKRD.

It belongs to the jagunal family.

It is found in the endoplasmic reticulum membrane. The chain is Protein jagunal homolog from Caenorhabditis briggsae.